The following is a 234-amino-acid chain: UPF0173 metal-dependent hydrolase RHECIAT_CH0001941 (234 aa).

It belongs to the UPF0173 family.

This is UPF0173 metal-dependent hydrolase RHECIAT_CH0001941 from Rhizobium etli (strain CIAT 652).